The following is a 493-amino-acid chain: 3-octaprenyl-4-hydroxybenzoate carboxy-lyase (493 aa).

Asn172 is a binding site for Mn(2+). Prenylated FMN is bound by residues 175–177 (IYR), 189–191 (RWL), and 194–195 (RG). Glu238 contributes to the Mn(2+) binding site. Asp287 (proton donor) is an active-site residue.

This sequence belongs to the UbiD family. Homohexamer. The cofactor is prenylated FMN. Mn(2+) serves as cofactor.

Its subcellular location is the cell membrane. The enzyme catalyses a 4-hydroxy-3-(all-trans-polyprenyl)benzoate + H(+) = a 2-(all-trans-polyprenyl)phenol + CO2. It participates in cofactor biosynthesis; ubiquinone biosynthesis. Its function is as follows. Catalyzes the decarboxylation of 3-octaprenyl-4-hydroxy benzoate to 2-octaprenylphenol, an intermediate step in ubiquinone biosynthesis. This Shewanella baltica (strain OS195) protein is 3-octaprenyl-4-hydroxybenzoate carboxy-lyase.